The chain runs to 37 residues: Large ribosomal subunit protein bL36 (37 aa).

Belongs to the bacterial ribosomal protein bL36 family.

The chain is Large ribosomal subunit protein bL36 from Sulfurihydrogenibium sp. (strain YO3AOP1).